Reading from the N-terminus, the 274-residue chain is Exosome complex component Rrp42 (274 aa).

Belongs to the RNase PH family. Rrp42 subfamily. Component of the archaeal exosome complex. Forms a hexameric ring-like arrangement composed of 3 Rrp41-Rrp42 heterodimers. The hexameric ring associates with a trimer of Rrp4 and/or Csl4 subunits.

It is found in the cytoplasm. Non-catalytic component of the exosome, which is a complex involved in RNA degradation. Contributes to the structuring of the Rrp41 active site. The sequence is that of Exosome complex component Rrp42 from Pyrococcus horikoshii (strain ATCC 700860 / DSM 12428 / JCM 9974 / NBRC 100139 / OT-3).